The primary structure comprises 417 residues: Gamma-glutamyl phosphate reductase (417 aa).

It belongs to the gamma-glutamyl phosphate reductase family.

It localises to the cytoplasm. The catalysed reaction is L-glutamate 5-semialdehyde + phosphate + NADP(+) = L-glutamyl 5-phosphate + NADPH + H(+). It functions in the pathway amino-acid biosynthesis; L-proline biosynthesis; L-glutamate 5-semialdehyde from L-glutamate: step 2/2. In terms of biological role, catalyzes the NADPH-dependent reduction of L-glutamate 5-phosphate into L-glutamate 5-semialdehyde and phosphate. The product spontaneously undergoes cyclization to form 1-pyrroline-5-carboxylate. This is Gamma-glutamyl phosphate reductase from Escherichia coli O8 (strain IAI1).